The sequence spans 420 residues: Disease resistance protein CHS1 (420 aa).

One can recognise a TIR domain in the interval 12 to 167 (RELDVFLSFS…QIADDIRLMF (156 aa)). E86 is an active-site residue. Residues 185 to 406 (MKALYALLAL…KDIKEVWKIM (222 aa)) form the NB-ARC domain.

In terms of tissue distribution, mostly expressed in leaves and flowers (mainly in sepals), and, at a lower intensity, in stems. Present at low levels in roots and seeds.

It localises to the cytoplasm. It is found in the nucleus. The catalysed reaction is NAD(+) + H2O = ADP-D-ribose + nicotinamide + H(+). In terms of biological role, confers resistance to low temperatures by limiting chloroplast damage and cell death, thus maintaining growth homeostasis. Regulates steryl-esters and sterols accumulation. Limits leaf necrosis associated with virulent bacterial infection (e.g. Pseudomonas syringae pv. tomato DC3000). In Arabidopsis thaliana (Mouse-ear cress), this protein is Disease resistance protein CHS1.